The chain runs to 375 residues: Alcohol dehydrogenase 6 (375 aa).

Serine 23 bears the Phosphoserine mark. Zn(2+) contacts are provided by cysteine 47, histidine 69, cysteine 99, cysteine 102, cysteine 105, cysteine 113, and cysteine 175. NAD(+)-binding positions include glycine 200–glycine 205, aspartate 224, lysine 229, valine 293–leucine 295, and arginine 370.

It belongs to the zinc-containing alcohol dehydrogenase family. Class-V subfamily. Dimer. It depends on Zn(2+) as a cofactor.

The protein localises to the cytoplasm. The enzyme catalyses a primary alcohol + NAD(+) = an aldehyde + NADH + H(+). The catalysed reaction is a secondary alcohol + NAD(+) = a ketone + NADH + H(+). Functionally, alcohol dehydrogenase. Catalyzes the NAD-dependent oxidation of primary alcohols to the corresponding aldehydes. Oxidizes secondary alcohols to the corresponding ketones. The chain is Alcohol dehydrogenase 6 (ADH6) from Pongo abelii (Sumatran orangutan).